Consider the following 596-residue polypeptide: Elongation factor 4 (596 aa).

A tr-type G domain is found at 2 to 183 (ENIRNFSIIA…AIIKRIPAPK (182 aa)). Residues 14–19 (DHGKST) and 130–133 (NKID) each bind GTP.

The protein belongs to the TRAFAC class translation factor GTPase superfamily. Classic translation factor GTPase family. LepA subfamily.

Its subcellular location is the cell inner membrane. It carries out the reaction GTP + H2O = GDP + phosphate + H(+). Required for accurate and efficient protein synthesis under certain stress conditions. May act as a fidelity factor of the translation reaction, by catalyzing a one-codon backward translocation of tRNAs on improperly translocated ribosomes. Back-translocation proceeds from a post-translocation (POST) complex to a pre-translocation (PRE) complex, thus giving elongation factor G a second chance to translocate the tRNAs correctly. Binds to ribosomes in a GTP-dependent manner. The polypeptide is Elongation factor 4 (Campylobacter hominis (strain ATCC BAA-381 / DSM 21671 / CCUG 45161 / LMG 19568 / NCTC 13146 / CH001A)).